The following is a 332-amino-acid chain: Fructose-1,6-bisphosphatase class 1 (332 aa).

Residues Glu89, Asp110, Leu112, and Asp113 each coordinate Mg(2+). Residues 113 to 116 (DGSS), Asn206, Tyr239, 257 to 259 (YLY), and Lys269 contribute to the substrate site. Mg(2+) is bound at residue Glu275.

This sequence belongs to the FBPase class 1 family. In terms of assembly, homotetramer. Requires Mg(2+) as cofactor.

It localises to the cytoplasm. It carries out the reaction beta-D-fructose 1,6-bisphosphate + H2O = beta-D-fructose 6-phosphate + phosphate. It participates in carbohydrate biosynthesis; gluconeogenesis. The protein is Fructose-1,6-bisphosphatase class 1 of Klebsiella pneumoniae subsp. pneumoniae (strain ATCC 700721 / MGH 78578).